A 394-amino-acid polypeptide reads, in one-letter code: MAETFLFTSESVNEGHPDKLCDQISDAVLDACLEQDPDSKVACETCTKTNMVMVFGEITTKANVDYEKIVRDTCRTIGFISDDVGLDADKCKVLVNIEQQSPDIAQGVHGHFTKRPEEVGAGDQGHMFGYATDETPELMPLTHVLATKLGSRLTEVRKNGTCAWLRPDGKTQVTIEYYNENGAMVPVRVHTVLISTQHDETVSNDQIAADLKEHVIKPVIPEKYLDEKTIFHLNPSGRFVIGGPHGDAGLTGRKIIIDTYGGWGAHGGGAFSGKDPTKVDRSGAYVVRQAAKSIVANGLARRCIVQVSYAIGVPEPLSVFVDSYGTGKIPDREILQIVKENFDFRPGMITINLDLKRGGNSRFLKTAAYGHFGRDDPDFTWEVVKPLKWEKPQA.

Glu-10 lines the Mg(2+) pocket. His-16 is an ATP binding site. Glu-44 serves as a coordination point for K(+). Positions 57 and 100 each coordinate L-methionine. ATP contacts are provided by residues 168 to 170 (DGK), 236 to 239 (SGRF), Asp-247, 253 to 254 (RK), Ala-270, Lys-274, and Lys-278. Residue Asp-247 participates in L-methionine binding. Lys-278 is a binding site for L-methionine.

Belongs to the AdoMet synthase family. As to quaternary structure, homotetramer. Mn(2+) serves as cofactor. Mg(2+) is required as a cofactor. It depends on Co(2+) as a cofactor. Requires K(+) as cofactor.

It localises to the cytoplasm. The enzyme catalyses L-methionine + ATP + H2O = S-adenosyl-L-methionine + phosphate + diphosphate. It functions in the pathway amino-acid biosynthesis; S-adenosyl-L-methionine biosynthesis; S-adenosyl-L-methionine from L-methionine: step 1/1. In terms of biological role, catalyzes the formation of S-adenosylmethionine from methionine and ATP. The reaction comprises two steps that are both catalyzed by the same enzyme: formation of S-adenosylmethionine (AdoMet) and triphosphate, and subsequent hydrolysis of the triphosphate. This Medicago truncatula (Barrel medic) protein is S-adenosylmethionine synthase (METK).